The chain runs to 77 residues: Acyl carrier protein (77 aa).

The Carrier domain maps to 2–77 (ADALERVTKI…DAVNYINSKQ (76 aa)). S37 is subject to O-(pantetheine 4'-phosphoryl)serine.

This sequence belongs to the acyl carrier protein (ACP) family. Post-translationally, 4'-phosphopantetheine is transferred from CoA to a specific serine of apo-ACP by AcpS. This modification is essential for activity because fatty acids are bound in thioester linkage to the sulfhydryl of the prosthetic group.

It localises to the cytoplasm. It functions in the pathway lipid metabolism; fatty acid biosynthesis. In terms of biological role, carrier of the growing fatty acid chain in fatty acid biosynthesis. This chain is Acyl carrier protein, found in Bacillus licheniformis (strain ATCC 14580 / DSM 13 / JCM 2505 / CCUG 7422 / NBRC 12200 / NCIMB 9375 / NCTC 10341 / NRRL NRS-1264 / Gibson 46).